Here is a 131-residue protein sequence, read N- to C-terminus: MTAANQNYGTGRRKSSSARVFIKPGNGKITINQRSLEVYFGRETSRMIVRQPLELVELTDKLDLYITVKGGGISGQAGAIRHGITRALMEYDESLRPALRAAGFVTRDARRVERKKVGLHKARRRPQYSKR.

The protein belongs to the universal ribosomal protein uS9 family.

This chain is Small ribosomal subunit protein uS9, found in Actinobacillus succinogenes (strain ATCC 55618 / DSM 22257 / CCUG 43843 / 130Z).